A 500-amino-acid chain; its full sequence is Protein FAM83F (500 aa).

The residue at position 2 (alanine 2) is an N-acetylalanine. The interval 2-300 (AESQLNCLDE…LYAISEEVDL (299 aa)) is DUF1669. Serine 4 carries the phosphoserine modification. 3 disordered regions span residues 82 to 109 (NARG…AYWP), 347 to 366 (QQRE…SGGE), and 391 to 500 (IPLG…CVIS). A compositionally biased stretch (basic and acidic residues) spans 397–419 (SQKDGRMVSHMHRDLKPKSREAP). Composition is skewed to low complexity over residues 425-442 (GEAA…SSRL) and 458-468 (SSVSTETSEVE). Over residues 477-500 (ENSSADISGKTSPSSAKPSNCVIS) the composition is skewed to polar residues. Residue serine 479 is modified to Phosphoserine.

Belongs to the FAM83 family. Directly interacts (via DUF1669) with CSNK1A1 and CSNK1A1L.

Its subcellular location is the cell membrane. In Homo sapiens (Human), this protein is Protein FAM83F (FAM83F).